The following is a 145-amino-acid chain: 3-hydroxyacyl-[acyl-carrier-protein] dehydratase FabZ (145 aa).

Residue His-51 is part of the active site.

The protein belongs to the thioester dehydratase family. FabZ subfamily.

It localises to the cytoplasm. It catalyses the reaction a (3R)-hydroxyacyl-[ACP] = a (2E)-enoyl-[ACP] + H2O. Its function is as follows. Involved in unsaturated fatty acids biosynthesis. Catalyzes the dehydration of short chain beta-hydroxyacyl-ACPs and long chain saturated and unsaturated beta-hydroxyacyl-ACPs. The sequence is that of 3-hydroxyacyl-[acyl-carrier-protein] dehydratase FabZ from Staphylococcus saprophyticus subsp. saprophyticus (strain ATCC 15305 / DSM 20229 / NCIMB 8711 / NCTC 7292 / S-41).